A 463-amino-acid polypeptide reads, in one-letter code: Bifunctional protein GlmU (463 aa).

The interval 1–228 is pyrophosphorylase; the sequence is MEQALSIVVL…PAEVQGVNDR (228 aa). Residues 10–13, K24, Q75, 80–81, 102–104, G138, E153, N168, and N226 each bind UDP-N-acetyl-alpha-D-glucosamine; these read LAAG, GT, and YGD. D104 contacts Mg(2+). Mg(2+) is bound at residue N226. Residues 229-249 form a linker region; it reads VQLAAAERVWQRRQAEDWMRA. Residues 250 to 463 form an N-acetyltransferase region; sequence GVTILDPDRF…RPDRGEGSDA (214 aa). 2 residues coordinate UDP-N-acetyl-alpha-D-glucosamine: R332 and K350. H362 functions as the Proton acceptor in the catalytic mechanism. Y365 and N376 together coordinate UDP-N-acetyl-alpha-D-glucosamine. Acetyl-CoA is bound by residues A379, 385–386, S404, A422, and R439; that span reads NY. The tract at residues 437-463 is disordered; it reads VARSAQRSIHGWRRPGQRPDRGEGSDA. A compositionally biased stretch (basic and acidic residues) spans 453-463; that stretch reads QRPDRGEGSDA.

This sequence in the N-terminal section; belongs to the N-acetylglucosamine-1-phosphate uridyltransferase family. In the C-terminal section; belongs to the transferase hexapeptide repeat family. In terms of assembly, homotrimer. It depends on Mg(2+) as a cofactor.

The protein localises to the cytoplasm. It catalyses the reaction alpha-D-glucosamine 1-phosphate + acetyl-CoA = N-acetyl-alpha-D-glucosamine 1-phosphate + CoA + H(+). The enzyme catalyses N-acetyl-alpha-D-glucosamine 1-phosphate + UTP + H(+) = UDP-N-acetyl-alpha-D-glucosamine + diphosphate. It functions in the pathway nucleotide-sugar biosynthesis; UDP-N-acetyl-alpha-D-glucosamine biosynthesis; N-acetyl-alpha-D-glucosamine 1-phosphate from alpha-D-glucosamine 6-phosphate (route II): step 2/2. It participates in nucleotide-sugar biosynthesis; UDP-N-acetyl-alpha-D-glucosamine biosynthesis; UDP-N-acetyl-alpha-D-glucosamine from N-acetyl-alpha-D-glucosamine 1-phosphate: step 1/1. The protein operates within bacterial outer membrane biogenesis; LPS lipid A biosynthesis. Functionally, catalyzes the last two sequential reactions in the de novo biosynthetic pathway for UDP-N-acetylglucosamine (UDP-GlcNAc). The C-terminal domain catalyzes the transfer of acetyl group from acetyl coenzyme A to glucosamine-1-phosphate (GlcN-1-P) to produce N-acetylglucosamine-1-phosphate (GlcNAc-1-P), which is converted into UDP-GlcNAc by the transfer of uridine 5-monophosphate (from uridine 5-triphosphate), a reaction catalyzed by the N-terminal domain. This Alkalilimnicola ehrlichii (strain ATCC BAA-1101 / DSM 17681 / MLHE-1) protein is Bifunctional protein GlmU.